Consider the following 306-residue polypeptide: Tryptophan 2,3-dioxygenase (306 aa).

The segment at 1–29 (MQPPGDDAAPRCPFAGAHAPDAPHVPEAA) is disordered. Substrate-binding positions include 75-79 (FIIQH), Tyr-137, and Arg-141. A heme-binding site is contributed by His-264. Thr-278 provides a ligand contact to substrate.

The protein belongs to the tryptophan 2,3-dioxygenase family. As to quaternary structure, homotetramer. Heme serves as cofactor.

It catalyses the reaction L-tryptophan + O2 = N-formyl-L-kynurenine. It participates in amino-acid degradation; L-tryptophan degradation via kynurenine pathway; L-kynurenine from L-tryptophan: step 1/2. Its function is as follows. Heme-dependent dioxygenase that catalyzes the oxidative cleavage of the L-tryptophan (L-Trp) pyrrole ring and converts L-tryptophan to N-formyl-L-kynurenine. Catalyzes the oxidative cleavage of the indole moiety. This is Tryptophan 2,3-dioxygenase from Burkholderia mallei (strain NCTC 10247).